The chain runs to 332 residues: Tryptophan--tRNA ligase (332 aa).

Residues 13–15 and 21–22 each bind ATP; these read KPS and GN. Positions 14–22 match the 'HIGH' region motif; it reads PSGDLTLGN. Asp-137 serves as a coordination point for L-tryptophan. Residues 149 to 151, Ile-188, and 197 to 201 each bind ATP; these read GKD and KMSKS. The 'KMSKS' region motif lies at 197 to 201; it reads KMSKS.

This sequence belongs to the class-I aminoacyl-tRNA synthetase family. As to quaternary structure, homodimer.

It localises to the cytoplasm. It carries out the reaction tRNA(Trp) + L-tryptophan + ATP = L-tryptophyl-tRNA(Trp) + AMP + diphosphate + H(+). Functionally, catalyzes the attachment of tryptophan to tRNA(Trp). In Clostridium perfringens (strain 13 / Type A), this protein is Tryptophan--tRNA ligase.